A 99-amino-acid polypeptide reads, in one-letter code: UPF0751 protein BCE_A0020 (99 aa).

The protein belongs to the UPF0751 family.

The chain is UPF0751 protein BCE_A0020 from Bacillus cereus (strain ATCC 10987 / NRS 248).